The following is a 770-amino-acid chain: Metabotropic glutamate receptor-like protein F (770 aa).

Residues Met-1 to Gly-22 form the signal peptide. At Gln-23–Lys-370 the chain is on the extracellular side. Residues Asn-24, Asn-185, Asn-260, Asn-286, Asn-319, and Asn-344 are each glycosylated (N-linked (GlcNAc...) asparagine). The helical transmembrane segment at Ile-371–Val-391 threads the bilayer. Residues Ile-392–Pro-405 lie on the Cytoplasmic side of the membrane. Residues Ile-406–Ala-426 form a helical membrane-spanning segment. At Arg-427–Ser-442 the chain is on the extracellular side. The chain crosses the membrane as a helical span at residues Leu-443–Phe-463. Over Asp-464–Ser-483 the chain is Cytoplasmic. A helical transmembrane segment spans residues Gly-484–Ala-504. The Extracellular segment spans residues Glu-505–Gly-528. Residues Ser-529 to Ile-549 traverse the membrane as a helical segment. The Cytoplasmic portion of the chain corresponds to Ser-550–Lys-565. A helical membrane pass occupies residues Pro-566–Val-586. Residues Ser-587–Gln-594 are Extracellular-facing. A helical membrane pass occupies residues Thr-595–Gly-615. Residues Thr-616–Val-770 are Cytoplasmic-facing. Residues Ser-639–Ile-740 are disordered. 2 stretches are compositionally biased toward basic and acidic residues: residues Ser-676 to Met-693 and Asn-730 to Ile-740. A coiled-coil region spans residues Arg-715–Asn-760.

This sequence in the N-terminal section; belongs to the BMP lipoprotein family. In the C-terminal section; belongs to the G-protein coupled receptor 3 family. GABA-B receptor subfamily.

It is found in the membrane. The chain is Metabotropic glutamate receptor-like protein F (grlF) from Dictyostelium discoideum (Social amoeba).